The following is a 429-amino-acid chain: Argininosuccinate lyase (429 aa).

The protein belongs to the lyase 1 family. Argininosuccinate lyase subfamily.

The protein resides in the cytoplasm. It carries out the reaction 2-(N(omega)-L-arginino)succinate = fumarate + L-arginine. The protein operates within amino-acid biosynthesis; L-arginine biosynthesis; L-arginine from L-ornithine and carbamoyl phosphate: step 3/3. The polypeptide is Argininosuccinate lyase (Pyrobaculum arsenaticum (strain DSM 13514 / JCM 11321 / PZ6)).